The sequence spans 331 residues: ADP-L-glycero-D-manno-heptose-6-epimerase (331 aa).

Residues 11-12, 32-33, Lys-39, Lys-54, 75-79, and Asn-92 each bind NADP(+); these read FI, DN, and EGACS. Tyr-139 functions as the Proton acceptor in the catalytic mechanism. Lys-143 is an NADP(+) binding site. Asn-168 is a binding site for substrate. NADP(+) contacts are provided by Val-169 and Lys-177. The active-site Proton acceptor is the Lys-177. Substrate-binding positions include Arg-179, His-186, 200–203, Arg-213, and Tyr-292; that span reads FGEY.

It belongs to the NAD(P)-dependent epimerase/dehydratase family. HldD subfamily. Homopentamer. It depends on NADP(+) as a cofactor.

The catalysed reaction is ADP-D-glycero-beta-D-manno-heptose = ADP-L-glycero-beta-D-manno-heptose. The protein operates within nucleotide-sugar biosynthesis; ADP-L-glycero-beta-D-manno-heptose biosynthesis; ADP-L-glycero-beta-D-manno-heptose from D-glycero-beta-D-manno-heptose 7-phosphate: step 4/4. Functionally, catalyzes the interconversion between ADP-D-glycero-beta-D-manno-heptose and ADP-L-glycero-beta-D-manno-heptose via an epimerization at carbon 6 of the heptose. In Ralstonia pickettii (strain 12J), this protein is ADP-L-glycero-D-manno-heptose-6-epimerase.